The primary structure comprises 237 residues: Ribonuclease PH (237 aa).

Phosphate is bound by residues arginine 86 and 124–126; that span reads GTR.

The protein belongs to the RNase PH family. Homohexameric ring arranged as a trimer of dimers.

It carries out the reaction tRNA(n+1) + phosphate = tRNA(n) + a ribonucleoside 5'-diphosphate. Functionally, phosphorolytic 3'-5' exoribonuclease that plays an important role in tRNA 3'-end maturation. Removes nucleotide residues following the 3'-CCA terminus of tRNAs; can also add nucleotides to the ends of RNA molecules by using nucleoside diphosphates as substrates, but this may not be physiologically important. Probably plays a role in initiation of 16S rRNA degradation (leading to ribosome degradation) during starvation. This chain is Ribonuclease PH, found in Methylobacterium nodulans (strain LMG 21967 / CNCM I-2342 / ORS 2060).